The sequence spans 753 residues: Ion-translocating oxidoreductase complex subunit C (753 aa).

4Fe-4S ferredoxin-type domains follow at residues 367 to 397 (EMGEPQEEKGCIRCSACADACPADLLPQQLY) and 407 to 436 (KATAHNLADCIECGACAWVCPSNIPLVQYF). [4Fe-4S] cluster contacts are provided by C377, C380, C383, C387, C416, C419, C422, and C426. Disordered stretches follow at residues 517–561 (AKPD…RKAA), 606–625 (RKAEQQVAPVEAPVAEPVDP), 640–659 (RKAEQQVAPVEAPVAEPVDP), and 705–735 (AKARKAEQQAAQPDLASAAANDDPRKAAVAA). A compositionally biased stretch (basic and acidic residues) spans 526 to 537 (AAREARKAEARA). 3 stretches are compositionally biased toward low complexity: residues 610–622 (QQVAPVEAPVAEP), 644–656 (QQVAPVEAPVAEP), and 712–735 (QQAAQPDLASAAANDDPRKAAVAA).

This sequence belongs to the 4Fe4S bacterial-type ferredoxin family. RnfC subfamily. In terms of assembly, the complex is composed of six subunits: RnfA, RnfB, RnfC, RnfD, RnfE and RnfG. The cofactor is [4Fe-4S] cluster.

The protein resides in the cell inner membrane. Part of a membrane-bound complex that couples electron transfer with translocation of ions across the membrane. The polypeptide is Ion-translocating oxidoreductase complex subunit C (Klebsiella pneumoniae (strain 342)).